The sequence spans 515 residues: Bifunctional purine biosynthesis protein PurH (515 aa).

Residues 1 to 145 (MTKRALISVS…KNHASVTVVV (145 aa)) form the MGS-like domain.

Belongs to the PurH family.

The enzyme catalyses (6R)-10-formyltetrahydrofolate + 5-amino-1-(5-phospho-beta-D-ribosyl)imidazole-4-carboxamide = 5-formamido-1-(5-phospho-D-ribosyl)imidazole-4-carboxamide + (6S)-5,6,7,8-tetrahydrofolate. It carries out the reaction IMP + H2O = 5-formamido-1-(5-phospho-D-ribosyl)imidazole-4-carboxamide. The protein operates within purine metabolism; IMP biosynthesis via de novo pathway; 5-formamido-1-(5-phospho-D-ribosyl)imidazole-4-carboxamide from 5-amino-1-(5-phospho-D-ribosyl)imidazole-4-carboxamide (10-formyl THF route): step 1/1. Its pathway is purine metabolism; IMP biosynthesis via de novo pathway; IMP from 5-formamido-1-(5-phospho-D-ribosyl)imidazole-4-carboxamide: step 1/1. This chain is Bifunctional purine biosynthesis protein PurH, found in Streptococcus agalactiae serotype Ia (strain ATCC 27591 / A909 / CDC SS700).